A 174-amino-acid polypeptide reads, in one-letter code: 2-hydroxy-palmitic acid dioxygenase MPO1 (174 aa).

Residues 1 to 23 (MGEGLLDLRSQLGFYKFYHHNPK) are Cytoplasmic-facing. A helical membrane pass occupies residues 24–44 (NVLIHSIFVPTILFSGSCMLH). Over 45–63 (RVKIYQSISLTAVLSVLFS) the chain is Lumenal. A helical transmembrane segment spans residues 64 to 84 (IFYCLLYLPTGLLAGVLLLLL). The Cytoplasmic portion of the chain corresponds to 85–98 (NLALIDHRVDLTFK). The chain crosses the membrane as a helical span at residues 99–119 (QELGLFTIGWIFQFVGHGVFE). Residues 120–131 (KRRPALIDNLVQ) lie on the Lumenal side of the membrane. The chain crosses the membrane as a helical span at residues 132–152 (SLVLAPYFIMFEFLFKLGFMP). At 153–174 (RLKATLEHDLEIKQRNLRMQRQ) the chain is on the cytoplasmic side.

The protein belongs to the MPO1 family. It depends on Fe(2+) as a cofactor.

The protein localises to the endoplasmic reticulum membrane. It carries out the reaction (R)-2-hydroxyhexadecanoate + O2 = pentadecanoate + CO2 + H2O. Dioxygenase that catalyzes the alpha-oxidation of 2-hydroxy fatty acids in an iron-dependent manner. Involved in metabolism of phytosphingosine and is required for proper endoplasmic reticulum stress response. The protein is 2-hydroxy-palmitic acid dioxygenase MPO1 of Saccharomyces cerevisiae (strain ATCC 204508 / S288c) (Baker's yeast).